The primary structure comprises 238 residues: Ribosomal RNA small subunit methyltransferase G (238 aa).

S-adenosyl-L-methionine is bound by residues glycine 77, phenylalanine 82, 128–129 (AE), and arginine 147. Residues 216–238 (RKERSTPKKYPRKPGTPNKQPLS) form a disordered region.

The protein belongs to the methyltransferase superfamily. RNA methyltransferase RsmG family.

The protein resides in the cytoplasm. Its function is as follows. Specifically methylates the N7 position of guanine in position 535 of 16S rRNA. The protein is Ribosomal RNA small subunit methyltransferase G of Halalkalibacterium halodurans (strain ATCC BAA-125 / DSM 18197 / FERM 7344 / JCM 9153 / C-125) (Bacillus halodurans).